The sequence spans 188 residues: Molybdopterin synthase catalytic subunit (188 aa).

The span at 1–14 shows a compositional bias: low complexity; the sequence is MATQPPQDQTSTTP. The disordered stretch occupies residues 1–23; that stretch reads MATQPPQDQTSTTPSLPPHLDPT. Substrate is bound by residues 134–135, lysine 150, and 157–159; these read HR and KRE.

This sequence belongs to the MoaE family. MOCS2B subfamily. In terms of assembly, heterotetramer; composed of 2 small (MOCS2A) and 2 large (MOCS2B) subunits.

The protein localises to the cytoplasm. It catalyses the reaction 2 [molybdopterin-synthase sulfur-carrier protein]-C-terminal-Gly-aminoethanethioate + cyclic pyranopterin phosphate + H2O = molybdopterin + 2 [molybdopterin-synthase sulfur-carrier protein]-C-terminal Gly-Gly + 2 H(+). It participates in cofactor biosynthesis; molybdopterin biosynthesis. In terms of biological role, catalytic subunit of the molybdopterin synthase complex, a complex that catalyzes the conversion of precursor Z into molybdopterin. Acts by mediating the incorporation of 2 sulfur atoms from thiocarboxylated MOCS2A into precursor Z to generate a dithiolene group. In Aspergillus fumigatus (strain ATCC MYA-4609 / CBS 101355 / FGSC A1100 / Af293) (Neosartorya fumigata), this protein is Molybdopterin synthase catalytic subunit.